Reading from the N-terminus, the 457-residue chain is Siroheme synthase (457 aa).

The interval 1-204 is precorrin-2 dehydrogenase /sirohydrochlorin ferrochelatase; the sequence is MDHLPIFCQL…NDQKAITETT (204 aa). NAD(+)-binding positions include 22 to 23 and 43 to 44; these read DV and LA. Phosphoserine is present on S128. A uroporphyrinogen-III C-methyltransferase region spans residues 216 to 457; that stretch reads GEVVLVGAGP…RDKLNWFSNH (242 aa). P225 provides a ligand contact to S-adenosyl-L-methionine. The Proton acceptor role is filled by D248. The active-site Proton donor is K270. Residues 301–303, I306, 331–332, M382, and G411 contribute to the S-adenosyl-L-methionine site; these read GGD and TA.

This sequence in the N-terminal section; belongs to the precorrin-2 dehydrogenase / sirohydrochlorin ferrochelatase family. The protein in the C-terminal section; belongs to the precorrin methyltransferase family.

It catalyses the reaction uroporphyrinogen III + 2 S-adenosyl-L-methionine = precorrin-2 + 2 S-adenosyl-L-homocysteine + H(+). It carries out the reaction precorrin-2 + NAD(+) = sirohydrochlorin + NADH + 2 H(+). The catalysed reaction is siroheme + 2 H(+) = sirohydrochlorin + Fe(2+). It functions in the pathway cofactor biosynthesis; adenosylcobalamin biosynthesis; precorrin-2 from uroporphyrinogen III: step 1/1. Its pathway is cofactor biosynthesis; adenosylcobalamin biosynthesis; sirohydrochlorin from precorrin-2: step 1/1. The protein operates within porphyrin-containing compound metabolism; siroheme biosynthesis; precorrin-2 from uroporphyrinogen III: step 1/1. It participates in porphyrin-containing compound metabolism; siroheme biosynthesis; siroheme from sirohydrochlorin: step 1/1. It functions in the pathway porphyrin-containing compound metabolism; siroheme biosynthesis; sirohydrochlorin from precorrin-2: step 1/1. In terms of biological role, multifunctional enzyme that catalyzes the SAM-dependent methylations of uroporphyrinogen III at position C-2 and C-7 to form precorrin-2 via precorrin-1. Then it catalyzes the NAD-dependent ring dehydrogenation of precorrin-2 to yield sirohydrochlorin. Finally, it catalyzes the ferrochelation of sirohydrochlorin to yield siroheme. The polypeptide is Siroheme synthase (Escherichia coli (strain 55989 / EAEC)).